Reading from the N-terminus, the 590-residue chain is 2-hydroxyacyl-CoA lyase (590 aa).

Residues G43, Q128, Q255, 273–274 (RS), and R362 each bind 2-hydroxyisobutanoyl-CoA. Thiamine diphosphate is bound at residue 410–412 (GDL). R417 is a 2-hydroxyisobutanoyl-CoA binding site. Residue G433 coordinates thiamine diphosphate. D460 serves as a coordination point for Mg(2+). Thiamine diphosphate is bound by residues 461 to 462 (GA) and 487 to 492 (NRAWNI). Mg(2+) contacts are provided by N487 and A489. E493 functions as the Proton acceptor in the catalytic mechanism. 2-hydroxyisobutanoyl-CoA is bound at residue 561-564 (DSGK). The segment at 566 to 590 (LGFVPDYQALTPWNDAEVARRQEGI) is C-terminal lid.

This sequence belongs to the TPP enzyme family. As to quaternary structure, a homotetramer formed by a dimer of dimers; active sites are located in the dimer interface. Requires Mg(2+) as cofactor. Thiamine diphosphate is required as a cofactor.

It catalyses the reaction 2-hydroxyisobutanoyl-CoA = formyl-CoA + acetone. With respect to regulation, activity is stimulated by thiamine diphosphate. In terms of biological role, a lyase that reversibly degrades 2-hydroxyisobutyryl-CoA (2-HIB-CoA) to acetone and formyl-CoA. Probably also cleaves 2-hydroxy-2-methylbutyryl-CoA to butanone and formyl-CoA. Does not act on 2-hydroxy-2-ethylbutyryl-CoA. A C-terminal lid closes the active site upon substrate binding, and with residues Leu-127 and Ile-492 restricts the size of the active site cavity so it can only use short-chain (C4 and C5) acyl substrates. Part of a pathway that allows cells to grow on 2-methylpropane-1,2-diol or 2-hydroxyisobutyric acid (2-HIBA) as a sole carbon source. The chain is 2-hydroxyacyl-CoA lyase from Actinomycetospora chiangmaiensis (strain DSM 45062 / JCM 15998 / CCTCC AA 205017 / NBRC 104400 / YIM 0006).